A 348-amino-acid polypeptide reads, in one-letter code: A-type ATP synthase subunit C (348 aa).

This sequence belongs to the V-ATPase V0D/AC39 subunit family. Has multiple subunits with at least A(3), B(3), C, D, E, F, H, I and proteolipid K(x).

It localises to the cell membrane. Component of the A-type ATP synthase that produces ATP from ADP in the presence of a proton gradient across the membrane. The chain is A-type ATP synthase subunit C from Haloferax volcanii (strain ATCC 29605 / DSM 3757 / JCM 8879 / NBRC 14742 / NCIMB 2012 / VKM B-1768 / DS2) (Halobacterium volcanii).